A 358-amino-acid chain; its full sequence is Probable isocitrate dehydrogenase [NAD] subunit alpha, mitochondrial (358 aa).

R108, R118, R139, and D226 together coordinate substrate. Residues D226, D250, and D254 each coordinate Mg(2+).

Belongs to the isocitrate and isopropylmalate dehydrogenases family. In terms of assembly, heterooligomer of subunits alpha, beta, and gamma in the apparent ratio of 2:1:1. Mg(2+) serves as cofactor. The cofactor is Mn(2+).

The protein resides in the mitochondrion. It carries out the reaction D-threo-isocitrate + NAD(+) = 2-oxoglutarate + CO2 + NADH. The polypeptide is Probable isocitrate dehydrogenase [NAD] subunit alpha, mitochondrial (idha-1) (Caenorhabditis elegans).